The sequence spans 565 residues: Carboxylesterase 1D (565 aa).

Residues 1–18 form the signal peptide; that stretch reads MGLYPLIWLSLAACTAWG. N-linked (GlcNAc...) asparagine glycosylation occurs at N79. An intrachain disulfide couples C87 to C116. Catalysis depends on S221, which acts as the Acyl-ester intermediate. Residues C273 and C284 are joined by a disulfide bond. The Charge relay system role is filled by E353. K382 bears the N6-succinyllysine mark. H466 serves as the catalytic Charge relay system. A glycan (N-linked (GlcNAc...) asparagine) is linked at N489. Residues 562–565 carry the Prevents secretion from ER motif; it reads HVEL.

The protein belongs to the type-B carboxylesterase/lipase family. As to quaternary structure, homotrimer. In terms of tissue distribution, highest expression occurs in liver with lower levels in adipose tissue, kidney, heart, intestine, lung, testis and thymus.

The protein resides in the endoplasmic reticulum lumen. Its subcellular location is the cytoplasm. The protein localises to the cytosol. It localises to the lipid droplet. It is found in the microsome. The catalysed reaction is a carboxylic ester + H2O = an alcohol + a carboxylate + H(+). It carries out the reaction a long-chain fatty acyl ethyl ester + H2O = a long-chain fatty acid + ethanol + H(+). It catalyses the reaction all-trans-retinyl hexadecanoate + H2O = all-trans-retinol + hexadecanoate + H(+). Its function is as follows. Major lipase in white adipose tissue. Involved in the metabolism of xenobiotics and of natural substrates. Hydrolyzes triacylglycerols and monoacylglycerols, with a preference for monoacylglycerols. The susceptibility of the substrate increases with decreasing acyl chain length of the fatty acid moiety. Catalyzes the synthesis of fatty acid ethyl esters. Hydrolyzes retinyl esters. The protein is Carboxylesterase 1D of Mus musculus (Mouse).